The primary structure comprises 480 residues: Aspartyl/glutamyl-tRNA(Asn/Gln) amidotransferase subunit B (480 aa).

It belongs to the GatB/GatE family. GatB subfamily. In terms of assembly, heterotrimer of A, B and C subunits.

The catalysed reaction is L-glutamyl-tRNA(Gln) + L-glutamine + ATP + H2O = L-glutaminyl-tRNA(Gln) + L-glutamate + ADP + phosphate + H(+). The enzyme catalyses L-aspartyl-tRNA(Asn) + L-glutamine + ATP + H2O = L-asparaginyl-tRNA(Asn) + L-glutamate + ADP + phosphate + 2 H(+). In terms of biological role, allows the formation of correctly charged Asn-tRNA(Asn) or Gln-tRNA(Gln) through the transamidation of misacylated Asp-tRNA(Asn) or Glu-tRNA(Gln) in organisms which lack either or both of asparaginyl-tRNA or glutaminyl-tRNA synthetases. The reaction takes place in the presence of glutamine and ATP through an activated phospho-Asp-tRNA(Asn) or phospho-Glu-tRNA(Gln). The protein is Aspartyl/glutamyl-tRNA(Asn/Gln) amidotransferase subunit B of Streptococcus pneumoniae serotype 4 (strain ATCC BAA-334 / TIGR4).